Consider the following 204-residue polypeptide: Protein GrpE (204 aa).

Residues 1–12 (MSNEEQAQKDDA) are compositionally biased toward basic and acidic residues. Residues 1–32 (MSNEEQAQKDDAQPVNEAAIDATAEQADAEVE) form a disordered region. Low complexity predominate over residues 17-26 (EAAIDATAEQ).

It belongs to the GrpE family. As to quaternary structure, homodimer.

Its subcellular location is the cytoplasm. Participates actively in the response to hyperosmotic and heat shock by preventing the aggregation of stress-denatured proteins, in association with DnaK and GrpE. It is the nucleotide exchange factor for DnaK and may function as a thermosensor. Unfolded proteins bind initially to DnaJ; upon interaction with the DnaJ-bound protein, DnaK hydrolyzes its bound ATP, resulting in the formation of a stable complex. GrpE releases ADP from DnaK; ATP binding to DnaK triggers the release of the substrate protein, thus completing the reaction cycle. Several rounds of ATP-dependent interactions between DnaJ, DnaK and GrpE are required for fully efficient folding. The polypeptide is Protein GrpE (Pseudoalteromonas atlantica (strain T6c / ATCC BAA-1087)).